The following is a 74-amino-acid chain: Toxin BmKaTx17 (74 aa).

An N-terminal signal peptide occupies residues 1–8 (LLMTGVES). The LCN-type CS-alpha/beta domain occupies 10–72 (RDAYIAKNYN…KPIRIPGKCH (63 aa)). 4 disulfide bridges follow: cysteine 20/cysteine 71, cysteine 24/cysteine 44, cysteine 30/cysteine 54, and cysteine 34/cysteine 56. A propeptide spans 73-74 (RR) (removed by a carboxypeptidase).

This sequence belongs to the long (4 C-C) scorpion toxin superfamily. Sodium channel inhibitor family. Alpha subfamily. In terms of tissue distribution, expressed by the venom gland.

It localises to the secreted. Functionally, alpha toxins bind voltage-independently at site-3 of sodium channels (Nav) and inhibit the inactivation of the activated channels, thereby blocking neuronal transmission. The chain is Toxin BmKaTx17 from Olivierus martensii (Manchurian scorpion).